Reading from the N-terminus, the 180-residue chain is MYHVIAATTNPAKINAITLAFDDVYGPGQYRIEGVNVDSGVPLQPIGSTETRIGARQRVKNARQVRPEADFWVGIEAGIEDNMTFAWMVVEHLQARGESRSASLMLPDIILQGIRQGRELGDEMAVLSGISNVKQQGGAIGIFTQGKLTRTSVYHQALLLALVPFHNEIYQRPSPSKPAI.

8–13 provides a ligand contact to substrate; sequence TTNPAK. Aspartate 38 and glutamate 68 together coordinate Mg(2+). Position 68 to 69 (68 to 69) interacts with substrate; sequence EA.

This sequence belongs to the YjjX NTPase family. Homodimer. Mg(2+) is required as a cofactor. The cofactor is Mn(2+).

The enzyme catalyses XTP + H2O = XDP + phosphate + H(+). It catalyses the reaction ITP + H2O = IDP + phosphate + H(+). Phosphatase that hydrolyzes non-canonical purine nucleotides such as XTP and ITP to their respective diphosphate derivatives. Probably excludes non-canonical purines from DNA/RNA precursor pool, thus preventing their incorporation into DNA/RNA and avoiding chromosomal lesions. In Yersinia pestis bv. Antiqua (strain Antiqua), this protein is Inosine/xanthosine triphosphatase.